Here is a 202-residue protein sequence, read N- to C-terminus: MKPLTVRQREILDCIRRSVENEGFPPTIAEIARAIGVSSPHGVREQLRALERKGVIELIPSASRGIRLLARAEEPGLPLIGKVAAGRPLLTEAQVERYCQLGPELFEHKGDYLLRVQGMSMRDAGIIDGDLLVVQQAQEARSGQIVVVRLHDEVTVKRLRLEGALAYLEPANPEFSVIAVDPERQPLCIEGIVVGVIRTRVG.

The H-T-H motif DNA-binding region spans I28 to R48. Active-site for autocatalytic cleavage activity residues include S120 and K157.

This sequence belongs to the peptidase S24 family. In terms of assembly, homodimer.

The catalysed reaction is Hydrolysis of Ala-|-Gly bond in repressor LexA.. In terms of biological role, represses a number of genes involved in the response to DNA damage (SOS response), including recA and lexA. In the presence of single-stranded DNA, RecA interacts with LexA causing an autocatalytic cleavage which disrupts the DNA-binding part of LexA, leading to derepression of the SOS regulon and eventually DNA repair. This chain is LexA repressor, found in Methylococcus capsulatus (strain ATCC 33009 / NCIMB 11132 / Bath).